Reading from the N-terminus, the 75-residue chain is Small ribosomal subunit protein bS18 (75 aa).

This sequence belongs to the bacterial ribosomal protein bS18 family. In terms of assembly, part of the 30S ribosomal subunit. Forms a tight heterodimer with protein bS6.

Functionally, binds as a heterodimer with protein bS6 to the central domain of the 16S rRNA, where it helps stabilize the platform of the 30S subunit. In Vibrio atlanticus (strain LGP32) (Vibrio splendidus (strain Mel32)), this protein is Small ribosomal subunit protein bS18.